A 400-amino-acid polypeptide reads, in one-letter code: Formate-dependent phosphoribosylglycinamide formyltransferase (400 aa).

N(1)-(5-phospho-beta-D-ribosyl)glycinamide contacts are provided by residues 22-23 (EL) and Glu82. ATP is bound by residues Arg115, Lys157, 162-167 (SSGKGQ), 197-200 (EGFV), and Glu205. Residues 120–315 (RLAAETLGLP…EFELHARAIL (196 aa)) enclose the ATP-grasp domain. Mg(2+) contacts are provided by Glu274 and Glu286. N(1)-(5-phospho-beta-D-ribosyl)glycinamide-binding positions include Asp293, Lys362, and 369–370 (RR).

Belongs to the PurK/PurT family. As to quaternary structure, homodimer.

It catalyses the reaction N(1)-(5-phospho-beta-D-ribosyl)glycinamide + formate + ATP = N(2)-formyl-N(1)-(5-phospho-beta-D-ribosyl)glycinamide + ADP + phosphate + H(+). Its pathway is purine metabolism; IMP biosynthesis via de novo pathway; N(2)-formyl-N(1)-(5-phospho-D-ribosyl)glycinamide from N(1)-(5-phospho-D-ribosyl)glycinamide (formate route): step 1/1. Involved in the de novo purine biosynthesis. Catalyzes the transfer of formate to 5-phospho-ribosyl-glycinamide (GAR), producing 5-phospho-ribosyl-N-formylglycinamide (FGAR). Formate is provided by PurU via hydrolysis of 10-formyl-tetrahydrofolate. This chain is Formate-dependent phosphoribosylglycinamide formyltransferase, found in Mycolicibacterium vanbaalenii (strain DSM 7251 / JCM 13017 / BCRC 16820 / KCTC 9966 / NRRL B-24157 / PYR-1) (Mycobacterium vanbaalenii).